A 483-amino-acid polypeptide reads, in one-letter code: Cyclic AMP-dependent transcription factor ATF-7 (483 aa).

The interval 1 to 285 (MGDDRPFVCN…GMVVGSASTM (285 aa)) is transactivation domain. The segment at 7–31 (FVCNAPGCGQRFTNEDHLAVHKHKH) adopts a C2H2-type zinc-finger fold. Thr-51 is subject to Phosphothreonine; by MAPK11. A phosphothreonine mark is found at Thr-53 and Thr-101. Residue Lys-107 forms a Glycyl lysine isopeptide (Lys-Gly) (interchain with G-Cter in SUMO1) linkage. 2 disordered regions span residues 110-148 (EPVE…TPTP) and 299-345 (HPDA…NRAA). Low complexity-rich tracts occupy residues 114–126 (VDSS…ASSP) and 307–320 (QPQV…PSTG). Over residues 326-343 (TVDEDPDERRQRFLERNR) the composition is skewed to basic and acidic residues. The bZIP domain occupies 332-395 (DERRQRFLER…AQLKQLLLAH (64 aa)). The segment at 334–354 (RRQRFLERNRAAASRCRQKRK) is basic motif. Residues 360-388 (LEKKAEELTSQNIQLSNEVTLLRNEVAQL) form a leucine-zipper region. Disordered stretches follow at residues 407-440 (TQGY…SNGL) and 464-483 (LSMP…SAGR). Residues Ser-413 and Ser-423 each carry the phosphoserine modification. Residues 429–440 (QHSSATAPSNGL) are compositionally biased toward polar residues.

It belongs to the bZIP family. As to quaternary structure, homodimer; binds DNA as homodimer. Heterodimer; heterodimerizes with other members of ATF family and with JUN family members. Interacts with JNK2; the interaction does not phosphorylate ATF7 but acts as a docking site for other ATF-associated partners such as JUN family members. Interacts (via its transactivation domain) with TAF12 (isoforms TAFII15 and TAFII20); the interaction potentiates the transactivation activity (isoform TAFII20 only) and is inhibited by ATF7 sumoylation. Interacts with TAF4; the interaction inhibits the TAF12-dependent transactivation. Interacts with MAPK9; the interaction does not phosphorylate ATF7 but acts as a docking site for ATF7-associated partners such as JUN. Interacts with Ku complex components XRCC6 and XRCC7. Interacts with TERT. Post-translationally, on EGF stimulation, phosphorylated first on Thr-53 allowing subsequent phosphorylation on Thr-51. This latter phosphorylation prevents sumoylation, increases binding to TAF12 and enhances transcriptional activity. Social isolation stress as well as TNF-alpha also induce the phosphorylation of ATF7. Phosphorylated in proliferating colonic and small intestinal epithelial cells. In terms of processing, sumoylation delays nuclear localization and inhibits transactivation activity through preventing binding to TAF12. RANBP2 appears to be the specific E3 ligase.

Its subcellular location is the nucleus. It is found in the nucleoplasm. The protein localises to the chromosome. It localises to the telomere. Its function is as follows. Stress-responsive chromatin regulator that plays a role in various biological processes including innate immunological memory, adipocyte differentiation or telomerase regulation. In absence of stress, contributes to the formation of heterochromatin and heterochromatin-like structure by recruiting histone H3K9 tri- and di-methyltransferases thus silencing the transcription of target genes such as STAT1 in adipocytes, or genes involved in innate immunity in macrophages and adipocytes. Stress induces ATF7 phosphorylation that disrupts interactions with histone methyltransferase and enhances the association with coactivators containing histone acetyltransferase and/or histone demethylase, leading to disruption of the heterochromatin-like structure and subsequently transcriptional activation. In response to TNF-alpha, which is induced by various stresses, phosphorylated ATF7 and telomerase are released from telomeres leading to telomere shortening. Plays also a role in maintaining epithelial regenerative capacity and protecting against cell death during intestinal epithelial damage and repair. In Pongo abelii (Sumatran orangutan), this protein is Cyclic AMP-dependent transcription factor ATF-7 (ATF7).